Here is a 457-residue protein sequence, read N- to C-terminus: GTPase Der (457 aa).

EngA-type G domains lie at 4-169 and 177-352; these read PTIA…PENN and IMMS…NQHR. Residues 10–17, 57–61, 120–123, 183–190, 230–234, and 295–298 contribute to the GTP site; these read GRPNVGKS, DTGGL, NKCE, DTAGI, and NKWD. The KH-like domain occupies 353–438; it reads RRVTTSVVNE…PLILLWRGKQ (86 aa).

It belongs to the TRAFAC class TrmE-Era-EngA-EngB-Septin-like GTPase superfamily. EngA (Der) GTPase family. Associates with the 50S ribosomal subunit.

Its function is as follows. GTPase that plays an essential role in the late steps of ribosome biogenesis. This is GTPase Der from Prochlorococcus marinus (strain AS9601).